The following is a 113-amino-acid chain: Protein INCREASED RESISTANCE TO MYZUS PERSICAE 1 (113 aa).

Residues 56 to 100 (DFLKTCSLCNRSLCHHRDIYMYRGNNAFCSLECREKQIKLDEKKA) form an FLZ-type zinc finger.

This sequence belongs to the FLZ family. As to quaternary structure, interacts with KIN10 and KIN11 via its FLZ-type zinc finger domain. Interacts with KINB3 via its N-terminal part. Interacts with GEBP.

The protein localises to the nucleus. The protein resides in the cytoplasm. Functionally, may act as an adapter to facilitate the interaction of SnRK1 complex with effector proteins, conferring tissue- and stimulus-type specific differences in the SnRK1 regulation pathway. This Arabidopsis thaliana (Mouse-ear cress) protein is Protein INCREASED RESISTANCE TO MYZUS PERSICAE 1.